The chain runs to 139 residues: Protein Turandot B (139 aa).

The N-terminal stretch at M1–A21 is a signal peptide.

The protein belongs to the Turandot family.

Its subcellular location is the secreted. Functionally, a humoral factor that may play a role in stress tolerance. This chain is Protein Turandot B, found in Drosophila yakuba (Fruit fly).